The primary structure comprises 229 residues: 5'-methylthioadenosine/S-adenosylhomocysteine nucleosidase (229 aa).

The active-site Proton acceptor is the Glu-12. Substrate contacts are provided by residues Gly-78, Met-152, and 173 to 174 (ME). Residue Asp-197 is the Proton donor of the active site.

This sequence belongs to the PNP/UDP phosphorylase family. MtnN subfamily.

The enzyme catalyses S-adenosyl-L-homocysteine + H2O = S-(5-deoxy-D-ribos-5-yl)-L-homocysteine + adenine. It catalyses the reaction S-methyl-5'-thioadenosine + H2O = 5-(methylsulfanyl)-D-ribose + adenine. The catalysed reaction is 5'-deoxyadenosine + H2O = 5-deoxy-D-ribose + adenine. Its pathway is amino-acid biosynthesis; L-methionine biosynthesis via salvage pathway; S-methyl-5-thio-alpha-D-ribose 1-phosphate from S-methyl-5'-thioadenosine (hydrolase route): step 1/2. Functionally, catalyzes the irreversible cleavage of the glycosidic bond in both 5'-methylthioadenosine (MTA) and S-adenosylhomocysteine (SAH/AdoHcy) to adenine and the corresponding thioribose, 5'-methylthioribose and S-ribosylhomocysteine, respectively. Also cleaves 5'-deoxyadenosine, a toxic by-product of radical S-adenosylmethionine (SAM) enzymes, into 5-deoxyribose and adenine. The polypeptide is 5'-methylthioadenosine/S-adenosylhomocysteine nucleosidase (Oceanobacillus iheyensis (strain DSM 14371 / CIP 107618 / JCM 11309 / KCTC 3954 / HTE831)).